Reading from the N-terminus, the 629-residue chain is Probable potassium transport system protein Kup 3 (629 aa).

Transmembrane regions (helical) follow at residues leucine 20–phenylalanine 40, valine 54–valine 74, proline 106–threonine 126, proline 143–isoleucine 163, isoleucine 171–alanine 191, phenylalanine 212–threonine 232, tryptophan 253–leucine 273, phenylalanine 291–isoleucine 311, isoleucine 343–phenylalanine 363, alanine 372–leucine 392, isoleucine 400–alanine 420, and phenylalanine 425–isoleucine 445.

Belongs to the HAK/KUP transporter (TC 2.A.72) family.

The protein localises to the cell inner membrane. The catalysed reaction is K(+)(in) + H(+)(in) = K(+)(out) + H(+)(out). Transport of potassium into the cell. Likely operates as a K(+):H(+) symporter. The sequence is that of Probable potassium transport system protein Kup 3 from Legionella pneumophila (strain Corby).